The primary structure comprises 94 residues: C-C motif chemokine 26 (94 aa).

The first 23 residues, 1-23, serve as a signal peptide directing secretion; it reads MKSFPVAFLVLLIFILSVHRGVT. Disulfide bonds link cysteine 33-cysteine 57 and cysteine 34-cysteine 73.

Belongs to the intercrine beta (chemokine CC) family. In terms of assembly, monomer.

Its subcellular location is the secreted. Chemoattractant for eosinophils and basophils. Acts as a ligand for C-C chemokine receptor CCR3 which triggers Ca(2+) mobilization in eosinophils. Also acts as a ligand for CX3C chemokine receptor CX3CR1, inducing cell chemotaxis. This Canis lupus familiaris (Dog) protein is C-C motif chemokine 26.